We begin with the raw amino-acid sequence, 37 residues long: MWYFAWILGTLLACSFGVITALALEHVESGKAGQEDI.

Residues 4 to 24 (FAWILGTLLACSFGVITALAL) traverse the membrane as a helical segment.

This sequence belongs to the cytochrome ubiquinol oxidase subunit X family. In terms of assembly, may be a subunit of cytochrome bd-I ubiquinol oxidase. Probably interacts with CydA and CydB.

It localises to the cell inner membrane. The enzyme catalyses 2 a ubiquinol + O2(in) + 4 H(+)(in) = 2 a ubiquinone + 2 H2O(in) + 4 H(+)(out). It functions in the pathway energy metabolism; oxidative phosphorylation. Functionally, required for correct functioning of cytochrome bd-I oxidase. This protein and AppX may have some functional overlap. The protein is Cytochrome bd-I ubiquinol oxidase subunit X (cydX) of Escherichia coli (strain K12).